Here is an 868-residue protein sequence, read N- to C-terminus: MAMRAKGIRKNCQHLWRWGTMLLGMLMICSAAANLWVTVYYGVPVWKEATTTLFCASDAKAYDTEAHNVWATHACVPTNPNPQEVVLENVTENFNMWKNNMVEQMHEDIISLWDQSLKPCVKLTPLCVTLNCTDLNTNNTTNTTELSIIVVWEQRGKGEMRNCSFNITTSIRDKVQREYALFYKLDVEPIDDNKNTTNNTKYRLINCNTSVITQACPKVSFEPIPIHYCTPTGFALLKCNDKKFNGTGPCTNVSTVQCTHGIRPVVSTQLLLNGSLAEEEVVIRSENFTNNAKTIIVQLNVSVEINCTRPNNHTRKRVTLGPGRVWYTTGEILGNIRQAHCNISRAQWNNTLQQIATTLREQFGNKTIAFNQSSGGDPEIVMHSFNCGGEFFYCNSTQLFNSAWNVTSNGTWSVTRKQKDTGDIITLPCRIKQIINRWQVVGKAMYALPIKGLIRCSSNITGLLLTRDGGGENQTTEIFRPGGGDMRDNWRSELYKYKVVKIEPLGVAPTKAKRRVVQREKRAVGMLGAMFLGFLGAAGSTMGATSMALTVQARQLLSGIVQQQNNLLRAIKAQQHLLQLTVWGIKQLQARILAVERYLKDQQLLGFWGCSGKLICTTAVPWNASWSNKTLDQIWNNMTWMEWDREIDNYTHLIYTLIEESQNQQEKNQQELLQLDKWASLWTWSDITKWLWYIKIFIMIVGGLIGLRIVFAVLSIVNRVRQGYSPLSFQTLLPNPRGPDRPEGTEEGGGERGRDGSTRLVHGFLALVWDDLRSLCLFSYHRLRDLLLIVARIVELLGRRGWEVLKYWWNLLQYWSQELKNSAVSLVNVTAIAVAEGTDRVIEVVQRIYRAFLHIPRRIRQGFERALL.

The first 33 residues, 1–33 (MAMRAKGIRKNCQHLWRWGTMLLGMLMICSAAA), serve as a signal peptide directing secretion. The Extracellular segment spans residues 34 to 696 (NLWVTVYYGV…ITKWLWYIKI (663 aa)). A disulfide bridge connects residues cysteine 55 and cysteine 75. Asparagine 89, asparagine 131, asparagine 138, asparagine 139, asparagine 142, asparagine 162, asparagine 166, asparagine 195, asparagine 198, asparagine 208, asparagine 245, asparagine 252, asparagine 273, asparagine 287, asparagine 300, asparagine 306, asparagine 312, asparagine 342, asparagine 349, asparagine 365, and asparagine 371 each carry an N-linked (GlcNAc...) asparagine; by host glycan. 5 cysteine pairs are disulfide-bonded: cysteine 120–cysteine 216, cysteine 127–cysteine 207, cysteine 132–cysteine 163, cysteine 229–cysteine 258, and cysteine 239–cysteine 250. The tract at residues 132-162 (CTDLNTNNTTNTTELSIIVVWEQRGKGEMRN) is V1. The interval 163–207 (CSFNITTSIRDKVQREYALFYKLDVEPIDDNKNTTNNTKYRLINC) is V2. A V3 region spans residues 307–340 (CTRPNNHTRKRVTLGPGRVWYTTGEILGNIRQAH). Cysteine 307 and cysteine 341 form a disulfide bridge. Residues 373–383 (SSGGDPEIVMH) are CD4-binding loop. 2 cysteine pairs are disulfide-bonded: cysteine 387–cysteine 456 and cysteine 394–cysteine 429. Residues 394 to 429 (CNSTQLFNSAWNVTSNGTWSVTRKQKDTGDIITLPC) are V4. Residues asparagine 395, asparagine 405, asparagine 409, asparagine 459, and asparagine 473 are each glycosylated (N-linked (GlcNAc...) asparagine; by host). V5 regions lie at residues 472 to 482 (ENQTTEIFRPG) and 474 to 482 (QTTEIFRPG). The fusion peptide stretch occupies residues 523-544 (AVGMLGAMFLGFLGAAGSTMGA). Residues 586 to 604 (KQLQARILAVERYLKDQQL) are immunosuppression. Cysteine 610 and cysteine 616 are oxidised to a cystine. N-linked (GlcNAc...) asparagine; by host glycosylation is found at asparagine 623, asparagine 628, asparagine 637, and asparagine 649. Residues 645–679 (REIDNYTHLIYTLIEESQNQQEKNQQELLQLDKWA) adopt a coiled-coil conformation. The MPER; binding to GalCer stretch occupies residues 674-695 (QLDKWASLWTWSDITKWLWYIK). A helical membrane pass occupies residues 697 to 717 (FIMIVGGLIGLRIVFAVLSIV). The Cytoplasmic segment spans residues 718-868 (NRVRQGYSPL…IRQGFERALL (151 aa)). The short motif at 724–727 (YSPL) is the YXXL motif; contains endocytosis signal element. The segment at 731-755 (TLLPNPRGPDRPEGTEEGGGERGRD) is disordered. The segment covering 738–755 (GPDRPEGTEEGGGERGRD) has biased composition (basic and acidic residues). Cysteine 776 is lipidated: S-palmitoyl cysteine; by host. Positions 867-868 (LL) match the Di-leucine internalization motif motif.

It belongs to the HIV-1 env protein family. The mature envelope protein (Env) consists of a homotrimer of non-covalently associated gp120-gp41 heterodimers. The resulting complex protrudes from the virus surface as a spike. There seems to be as few as 10 spikes on the average virion. Interacts with host CD4, CCR5 and CXCR4. Gp120 also interacts with the C-type lectins CD209/DC-SIGN and CLEC4M/DC-SIGNR (collectively referred to as DC-SIGN(R)). Gp120 and gp41 interact with GalCer. Gp120 interacts with host ITGA4/ITGB7 complex; on CD4+ T-cells, this interaction results in rapid activation of integrin ITGAL/LFA-1, which facilitates efficient cell-to-cell spreading of HIV-1. Gp120 interacts with cell-associated heparan sulfate; this interaction increases virus infectivity on permissive cells and may be involved in infection of CD4- cells. As to quaternary structure, the mature envelope protein (Env) consists of a homotrimer of non-covalently associated gp120-gp41 heterodimers. The resulting complex protrudes from the virus surface as a spike. There seems to be as few as 10 spikes on the average virion. In terms of processing, highly glycosylated by host. The high number of glycan on the protein is reffered to as 'glycan shield' because it contributes to hide protein sequence from adaptive immune system. Palmitoylation of the transmembrane protein and of Env polyprotein (prior to its proteolytic cleavage) is essential for their association with host cell membrane lipid rafts. Palmitoylation is therefore required for envelope trafficking to classical lipid rafts, but not for viral replication. Post-translationally, specific enzymatic cleavages in vivo yield mature proteins. Envelope glycoproteins are synthesized as an inactive precursor that is heavily N-glycosylated and processed likely by host cell furin in the Golgi to yield the mature SU and TM proteins. The cleavage site between SU and TM requires the minimal sequence [KR]-X-[KR]-R. About 2 of the 9 disulfide bonds of gp41 are reduced by P4HB/PDI, following binding to CD4 receptor.

It localises to the virion membrane. Its subcellular location is the host cell membrane. The protein localises to the host endosome membrane. Oligomerizes in the host endoplasmic reticulum into predominantly trimers. In a second time, gp160 transits in the host Golgi, where glycosylation is completed. The precursor is then proteolytically cleaved in the trans-Golgi and thereby activated by cellular furin or furin-like proteases to produce gp120 and gp41. Functionally, attaches the virus to the host lymphoid cell by binding to the primary receptor CD4. This interaction induces a structural rearrangement creating a high affinity binding site for a chemokine coreceptor like CXCR4 and/or CCR5. Acts as a ligand for CD209/DC-SIGN and CLEC4M/DC-SIGNR, which are respectively found on dendritic cells (DCs), and on endothelial cells of liver sinusoids and lymph node sinuses. These interactions allow capture of viral particles at mucosal surfaces by these cells and subsequent transmission to permissive cells. HIV subverts the migration properties of dendritic cells to gain access to CD4+ T-cells in lymph nodes. Virus transmission to permissive T-cells occurs either in trans (without DCs infection, through viral capture and transmission), or in cis (following DCs productive infection, through the usual CD4-gp120 interaction), thereby inducing a robust infection. In trans infection, bound virions remain infectious over days and it is proposed that they are not degraded, but protected in non-lysosomal acidic organelles within the DCs close to the cell membrane thus contributing to the viral infectious potential during DCs' migration from the periphery to the lymphoid tissues. On arrival at lymphoid tissues, intact virions recycle back to DCs' cell surface allowing virus transmission to CD4+ T-cells. In terms of biological role, acts as a class I viral fusion protein. Under the current model, the protein has at least 3 conformational states: pre-fusion native state, pre-hairpin intermediate state, and post-fusion hairpin state. During fusion of viral and target intracellular membranes, the coiled coil regions (heptad repeats) assume a trimer-of-hairpins structure, positioning the fusion peptide in close proximity to the C-terminal region of the ectodomain. The formation of this structure appears to drive apposition and subsequent fusion of viral and target cell membranes. Complete fusion occurs in host cell endosomes and is dynamin-dependent, however some lipid transfer might occur at the plasma membrane. The virus undergoes clathrin-dependent internalization long before endosomal fusion, thus minimizing the surface exposure of conserved viral epitopes during fusion and reducing the efficacy of inhibitors targeting these epitopes. Membranes fusion leads to delivery of the nucleocapsid into the cytoplasm. This is Envelope glycoprotein gp160 from Human immunodeficiency virus type 1 group M subtype B (isolate CDC-451) (HIV-1).